Here is a 125-residue protein sequence, read N- to C-terminus: Glycine cleavage system H protein (125 aa).

The 83-residue stretch at 19–101 (VAVVGISDYA…EGKGWFMKLK (83 aa)) folds into the Lipoyl-binding domain. At lysine 60 the chain carries N6-lipoyllysine.

Belongs to the GcvH family. The glycine cleavage system is composed of four proteins: P, T, L and H. (R)-lipoate serves as cofactor.

Its function is as follows. The glycine cleavage system catalyzes the degradation of glycine. The H protein shuttles the methylamine group of glycine from the P protein to the T protein. The polypeptide is Glycine cleavage system H protein (Xanthobacter autotrophicus (strain ATCC BAA-1158 / Py2)).